The primary structure comprises 888 residues: 3-hydroxy-3-methylglutaryl-coenzyme A reductase (888 aa).

Over 1 to 9 the chain is Cytoplasmic; it reads MLSRLFRMH. A helical transmembrane segment spans residues 10 to 39; sequence GLFVASHPWEVIVGTVTLTICMMSMNMFTG. The Lumenal segment spans residues 40-56; it reads NNKICGWNYECPKFEED. The helical transmembrane segment at 57–78 threads the bilayer; the sequence is VLSSDIIILTITRCIAILYIYF. The SSD domain occupies 61-218; that stretch reads DIIILTITRC…MTFFPACVSL (158 aa). The INSIG-binding motif signature appears at 75–78; the sequence is YIYF. The Cytoplasmic portion of the chain corresponds to 79-89; the sequence is QFQNLRQLGSK. Lys-89 participates in a covalent cross-link: Glycyl lysine isopeptide (Lys-Gly) (interchain with G-Cter in ubiquitin). The chain crosses the membrane as a helical span at residues 90-114; sequence YILGIAGLFTIFSSFVFSTVVIHFL. Residues 115–123 are Lumenal-facing; that stretch reads DKELTGLNE. Residues 124-149 traverse the membrane as a helical segment; sequence ALPFFLLLIDLSRASTLAKFALSSNS. At 150 to 159 the chain is on the cytoplasmic side; that stretch reads QDEVRENIAR. Residues 160–187 traverse the membrane as a helical segment; sequence GMAILGPTFTLDALVECLVIGVGTMSGV. Residues 188–191 are Lumenal-facing; it reads RQLE. The chain crosses the membrane as a helical span at residues 192-220; sequence IMCCFGCMSVLANYFVFMTFFPACVSLVL. Over 221–248 the chain is Cytoplasmic; the sequence is ELSRESREGRPIWLLSHFARVLEEEENK. Lys-248 is covalently cross-linked (Glycyl lysine isopeptide (Lys-Gly) (interchain with G-Cter in ubiquitin)). A helical membrane pass occupies residues 249-275; it reads PNPVTQRVKMIMSLGLVLVHAHSRWIA. The Lumenal segment spans residues 276-314; the sequence is DPSPQNSTADTSKVSLGLDENVSKRIEPSVSLWQFYLSK. Residues Asn-281 and Asn-296 are each glycosylated (N-linked (GlcNAc...) asparagine). A helical transmembrane segment spans residues 315-339; sequence MISMDIEQVITLSLALLLAVKYIFF. At 340–888 the chain is on the cytoplasmic side; that stretch reads EQTETESTLS…LQGACTKKTA (549 aa). Catalysis depends on charge relay system residues Glu-559, Lys-691, and Asp-767. The Proton donor role is filled by His-866. Phosphoserine; by AMPK is present on Ser-872.

This sequence belongs to the HMG-CoA reductase family. In terms of assembly, homotetramer. Homodimer. Interacts (via its SSD) with INSIG1; the interaction, accelerated by sterols, leads to the recruitment of HMGCR to AMFR/gp78 for its ubiquitination by the sterol-mediated ERAD pathway. Interacts with UBIAD1. Post-translationally, undergoes sterol-mediated ubiquitination and ER-associated degradation (ERAD). Accumulation of sterols in the endoplasmic reticulum (ER) membrane, triggers binding of the reductase to the ER membrane protein INSIG1 or INSIG2. The INSIG1 binding leads to the recruitment of the ubiquitin ligase, AMFR/gp78, RNF139 or RNF145, initiating ubiquitination of the reductase. The ubiquitinated reductase is then extracted from the ER membrane and delivered to cytosolic 26S proteosomes by a mechanism probably mediated by the ATPase Valosin-containing protein VCP/p97. The INSIG2-binding leads to the recruitment of the ubiquitin ligase RNF139, initiating ubiquitination of the reductase. Lys-248 is the main site of ubiquitination. Ubiquitination is enhanced by the presence of a geranylgeranylated protein. In terms of processing, N-glycosylated. Deglycosylated by NGLY1 on release from the endoplasmic reticulum (ER) in a sterol-mediated manner. Phosphorylated. Phosphorylation at Ser-872 reduces the catalytic activity.

The protein localises to the endoplasmic reticulum membrane. Its subcellular location is the peroxisome membrane. It catalyses the reaction (R)-mevalonate + 2 NADP(+) + CoA = (3S)-3-hydroxy-3-methylglutaryl-CoA + 2 NADPH + 2 H(+). It functions in the pathway metabolic intermediate biosynthesis; (R)-mevalonate biosynthesis; (R)-mevalonate from acetyl-CoA: step 3/3. Its activity is regulated as follows. Regulated by a negative feedback mechanism through sterols and non-sterol metabolites derived from mevalonate. Phosphorylation at Ser-872 down-regulates the catalytic activity. Its function is as follows. Catalyzes the conversion of (3S)-hydroxy-3-methylglutaryl-CoA (HMG-CoA) to mevalonic acid, the rate-limiting step in the synthesis of cholesterol and other isoprenoids, thus plays a critical role in cellular cholesterol homeostasis. The polypeptide is 3-hydroxy-3-methylglutaryl-coenzyme A reductase (HMGCR) (Pongo abelii (Sumatran orangutan)).